Here is a 338-residue protein sequence, read N- to C-terminus: Anthranilate phosphoribosyltransferase (338 aa).

5-phospho-alpha-D-ribose 1-diphosphate is bound by residues G78, 81–82 (GD), S86, 88–91 (NIST), 106–114 (KHGNKSVTS), and S118. G78 is an anthranilate binding site. S90 provides a ligand contact to Mg(2+). Residue N109 participates in anthranilate binding. Residue R163 participates in anthranilate binding. Positions 222 and 223 each coordinate Mg(2+).

It belongs to the anthranilate phosphoribosyltransferase family. As to quaternary structure, homodimer. Mg(2+) is required as a cofactor.

It catalyses the reaction N-(5-phospho-beta-D-ribosyl)anthranilate + diphosphate = 5-phospho-alpha-D-ribose 1-diphosphate + anthranilate. Its pathway is amino-acid biosynthesis; L-tryptophan biosynthesis; L-tryptophan from chorismate: step 2/5. Its function is as follows. Catalyzes the transfer of the phosphoribosyl group of 5-phosphorylribose-1-pyrophosphate (PRPP) to anthranilate to yield N-(5'-phosphoribosyl)-anthranilate (PRA). The protein is Anthranilate phosphoribosyltransferase of Staphylococcus saprophyticus subsp. saprophyticus (strain ATCC 15305 / DSM 20229 / NCIMB 8711 / NCTC 7292 / S-41).